We begin with the raw amino-acid sequence, 303 residues long: Hemolysin E (303 aa).

The cysteines at positions 87 and 285 are disulfide-linked. Residues 179–199 traverse the membrane as a helical segment; sequence AGAAAGIVAGPFGLIISYSIA.

Belongs to the hemolysin E family. As to quaternary structure, monomer and oligomer. In periplasm, it is present as a monomer, while in outer membrane vesicles, it oligomerizes to form a pore structure that is active. The pore is formed by a dodecamer. Post-translationally, in periplasm, it forms a disulfide bond, which prevents the oligomerization. In outer membrane vesicles, the redox status prevents formation of the disulfide bond, leading to oligomerization and pore formation.

It is found in the secreted. The protein localises to the periplasm. The protein resides in the host cell membrane. Functionally, toxin, which has some hemolytic activity towards mammalian cells. Acts by forming a pore-like structure upon contact with mammalian cells. The sequence is that of Hemolysin E (hlyE) from Salmonella typhi.